The following is a 208-amino-acid chain: Imidazole glycerol phosphate synthase subunit HisH (208 aa).

Residues 1-206 form the Glutamine amidotransferase type-1 domain; it reads MIVIIDYDTG…KEVTYSCKSS (206 aa). Catalysis depends on cysteine 79, which acts as the Nucleophile. Active-site residues include histidine 181 and glutamate 183.

In terms of assembly, heterodimer of HisH and HisF.

The protein localises to the cytoplasm. It catalyses the reaction 5-[(5-phospho-1-deoxy-D-ribulos-1-ylimino)methylamino]-1-(5-phospho-beta-D-ribosyl)imidazole-4-carboxamide + L-glutamine = D-erythro-1-(imidazol-4-yl)glycerol 3-phosphate + 5-amino-1-(5-phospho-beta-D-ribosyl)imidazole-4-carboxamide + L-glutamate + H(+). The enzyme catalyses L-glutamine + H2O = L-glutamate + NH4(+). Its pathway is amino-acid biosynthesis; L-histidine biosynthesis; L-histidine from 5-phospho-alpha-D-ribose 1-diphosphate: step 5/9. IGPS catalyzes the conversion of PRFAR and glutamine to IGP, AICAR and glutamate. The HisH subunit catalyzes the hydrolysis of glutamine to glutamate and ammonia as part of the synthesis of IGP and AICAR. The resulting ammonia molecule is channeled to the active site of HisF. The protein is Imidazole glycerol phosphate synthase subunit HisH of Listeria monocytogenes serotype 4a (strain HCC23).